The following is a 510-amino-acid chain: MIKSTTNPQEQRLPRPEDQSPAPPPPPPSSATTSTAAPATPTHQVATVIANMDTLKTAFLPNLSMDPNVHVSPHYCPMCHQQFERPQHVADHMQLCHGITLNAQGAIATLDGGHPQAQQHPKLSHPCFNCDEKFGNAVDLDEHHRLAHQTPAFLSRCLMCSIYGIHSATQQPNEYKCTQCGSICTTAMLAAGQQGFMEQQEAAVTPDDQLPAMAPRDMRLTPEEQHHQQQLQAEHHHQQQHQQQQQQQQQQQELLEQQQREMQEQAQQQQVHHHQQDQDLAGDQVALKVPPLTVKLNKNANGGAIVSHPQVIIKEEPLSLSDSGDVVNSVPVYAIQANPGVPAPASSGVLVGTQTVPADLAHKIRHKCPDCPKTFKTPGTLAMHRKIHTGEADATPKERPYTCSYCGKSFTQSNTLKQHTRIHTGEKPFRCGYCGRAFTVKDYLNKHLTTHTGEKPFHCGYCEKSFSVKDYLTKHIRTHTGEKPYTCPYCDKRFTQRSALTVHTTKLHPL.

Over residues 1–10 the composition is skewed to polar residues; that stretch reads MIKSTTNPQE. Positions 1 to 40 are disordered; that stretch reads MIKSTTNPQEQRLPRPEDQSPAPPPPPPSSATTSTAAPAT. The span at 30–40 shows a compositional bias: low complexity; sequence SATTSTAAPAT. 2 C2H2-type zinc fingers span residues 74 to 97 and 125 to 148; these read HYCP…QLCH and HPCF…RLAH. A compositionally biased stretch (basic and acidic residues) spans 222 to 237; that stretch reads PEEQHHQQQLQAEHHH. The interval 222 to 279 is disordered; that stretch reads PEEQHHQQQLQAEHHHQQQHQQQQQQQQQQQELLEQQQREMQEQAQQQQVHHHQQDQD. Residues 240-257 are compositionally biased toward low complexity; it reads QHQQQQQQQQQQQELLEQ. C2H2-type zinc fingers lie at residues 366–388, 401–423, 429–451, 457–479, and 485–508; these read HKCP…RKIH, YTCS…TRIH, FRCG…LTTH, FHCG…IRTH, and YTCP…TKLH.

As to expression, isoform I is found in embryos, pupae and adult somatic tissue; isoform II occurs in embryos, pupae, ovaries, testis and to a lesser extent in adult somatic tissue.

It is found in the nucleus. Transcriptional regulator; binds to the promoter region of Cp15. Also binds to its own promoter, thus having a probable autoregulatory role. The sequence is that of Chorion transcription factor Cf2 (Cf2) from Drosophila melanogaster (Fruit fly).